The following is a 134-amino-acid chain: Lymphocyte antigen 6F (134 aa).

The signal sequence occupies residues 1–26; it reads MDSCHTTKSCVLILLVVLLCAERAQG. Residues 27–119 enclose the UPAR/Ly6 domain; that stretch reads LECYNCLGVS…TGGSTWTMTR (93 aa). Cystine bridges form between C29-C53, C32-C41, C46-C74, C78-C98, and C99-C104. The GPI-anchor amidated glycine moiety is linked to residue G112. Positions 113–134 are cleaved as a propeptide — removed in mature form; it reads STWTMTRVLLLNLGSVFLQTLL.

It is found in the cell membrane. This is Lymphocyte antigen 6F (Ly6f) from Mus musculus (Mouse).